Here is a 57-residue protein sequence, read N- to C-terminus: MFRYTRFEKARIIGARALQIALGAPVLVDVPEGSTPLQAAIIEFEKGIIPITVIRPS.

The protein belongs to the archaeal Rpo6/eukaryotic RPB6 RNA polymerase subunit family. Part of the RNA polymerase complex.

It is found in the cytoplasm. The catalysed reaction is RNA(n) + a ribonucleoside 5'-triphosphate = RNA(n+1) + diphosphate. Functionally, DNA-dependent RNA polymerase (RNAP) catalyzes the transcription of DNA into RNA using the four ribonucleoside triphosphates as substrates. This Thermococcus gammatolerans (strain DSM 15229 / JCM 11827 / EJ3) protein is DNA-directed RNA polymerase subunit Rpo6.